Consider the following 84-residue polypeptide: Small ribosomal subunit protein bS18 (84 aa).

Belongs to the bacterial ribosomal protein bS18 family. In terms of assembly, part of the 30S ribosomal subunit. Forms a tight heterodimer with protein bS6.

Functionally, binds as a heterodimer with protein bS6 to the central domain of the 16S rRNA, where it helps stabilize the platform of the 30S subunit. This Methylorubrum extorquens (strain CM4 / NCIMB 13688) (Methylobacterium extorquens) protein is Small ribosomal subunit protein bS18.